Consider the following 346-residue polypeptide: Angiopoietin-related protein 7 (346 aa).

A signal peptide spans 1 to 26 (MLKKPLSAVTWLCIFIVAFVSHPAWL). A coiled-coil region spans residues 39–119 (QLKAANCCEE…DIMQLQAAQT (81 aa)). N-linked (GlcNAc...) asparagine glycosylation is present at Asn-58. The region spanning 122-343 (QTSADAIYDC…RVEMKIRPED (222 aa)) is the Fibrinogen C-terminal domain. A disulfide bridge links Cys-131 with Cys-162. Residues Asn-253 and Asn-267 are each glycosylated (N-linked (GlcNAc...) asparagine). Cys-285 and Cys-298 form a disulfide bridge.

As to quaternary structure, homotetramer; disulfide-linked. In terms of tissue distribution, highly expressed in the cornea (at protein level). Expression is restricted to the stromal layer. Also detected at the junction between the corneal stromal layer and the conjuctiva. Not detected in the sclera.

It is found in the secreted. Functionally, has a role in the formation and organization of the extracellular matrix. In the eye, it functions as a mediator of dexamethasone-induced matrix deposition in the trabecular meshwork, the tissue responsible for the outflow of the ocular aqueous humor and for the maintenance of intraocular pressure. Is a negative regulator of angiogenesis in the cornea, and plays a major role in maintaining corneal avascularity and transparency. The protein is Angiopoietin-related protein 7 (ANGPTL7) of Homo sapiens (Human).